The following is a 270-amino-acid chain: tRNA 2-(methylsulfanyl)-N(6)-isopentenyladenosine(37) hydroxylase (270 aa).

Residues Glu-59, Glu-137, His-140, Glu-190, Glu-219, and His-222 each contribute to the Fe cation site.

This sequence belongs to the MiaE family. In terms of assembly, monomer. Requires Fe cation as cofactor.

The catalysed reaction is 2-methylsulfanyl-N(6)-dimethylallyladenosine(37) in tRNA + AH2 + O2 = N(6)-[(2E)-4-hydroxy-3-methylbut-2-en-1-yl]-2-(methylsulfanyl)adenosine(37) in tRNA + A + H2O. Its pathway is tRNA modification; 2-methylthio-N-6-(cis-hydroxy)isopentenyl adenosine-tRNA biosynthesis. Its function is as follows. Involved in specific tRNA modification. Catalyzes the oxygen-dependent hydroxylation of 2-methylthio-N-6-isopentenyl adenosine (ms2i6A) to produce 2-methylthio-N-6-(cis-hydroxy)isopentenyl adenosine (ms2io6A) at position 37 in tRNAs. Can also use N6-(dimethylallyl)adenosine (i6A) as substrate, with lower efficiency. The presence of the hydroxyl group on the tRNA may regulate the ability of S.typhimurium to grow on the citric acid cycle (CAC) intermediates succinate, fumarate and malate. The polypeptide is tRNA 2-(methylsulfanyl)-N(6)-isopentenyladenosine(37) hydroxylase (Salmonella typhimurium (strain LT2 / SGSC1412 / ATCC 700720)).